An 86-amino-acid polypeptide reads, in one-letter code: Large ribosomal subunit protein uL23 (86 aa).

It belongs to the universal ribosomal protein uL23 family. Part of the 50S ribosomal subunit. Contacts protein L29.

Functionally, binds to 23S rRNA. One of the proteins that surrounds the polypeptide exit tunnel on the outside of the ribosome. The protein is Large ribosomal subunit protein uL23 of Methanococcus maripaludis (strain C7 / ATCC BAA-1331).